Consider the following 429-residue polypeptide: Mannose-6-phosphate isomerase (429 aa).

Ser-2 carries the post-translational modification N-acetylserine. Position 107 is a phosphoserine (Ser-107). Zn(2+)-binding residues include Gln-109, His-111, Glu-136, and His-281. Arg-300 is an active-site residue.

This sequence belongs to the mannose-6-phosphate isomerase type 1 family. Monomer. Requires Zn(2+) as cofactor.

Its subcellular location is the cytoplasm. It catalyses the reaction D-mannose 6-phosphate = D-fructose 6-phosphate. The protein operates within nucleotide-sugar biosynthesis; GDP-alpha-D-mannose biosynthesis; alpha-D-mannose 1-phosphate from D-fructose 6-phosphate: step 1/2. Can be inhibited by an excess of zinc. In terms of biological role, involved in the synthesis of the GDP-mannose and dolichol-phosphate-mannose required for a number of critical mannosyl transfer reactions. This chain is Mannose-6-phosphate isomerase (PMI40), found in Saccharomyces cerevisiae (strain ATCC 204508 / S288c) (Baker's yeast).